The primary structure comprises 332 residues: 2,7-dihydroxy-5-methyl-1-naphthoate 7-O-methyltransferase (332 aa).

A substrate-binding site is contributed by Arg11. S-adenosyl-L-methionine-binding positions include Trp133, His153, Asp175–Gly179, Gly177, Asp200, Ser227–Phe228, and Ser242–Ala243. The active-site Proton acceptor is His246. Asp247 contributes to the substrate binding site.

Belongs to the class I-like SAM-binding methyltransferase superfamily. Cation-independent O-methyltransferase family.

It carries out the reaction 2,7-dihydroxy-5-methyl-1-naphthoate + S-adenosyl-L-methionine = 2-hydroxy-7-methoxy-5-methyl-1-naphthoate + S-adenosyl-L-homocysteine + H(+). The protein operates within antibiotic biosynthesis. In terms of biological role, S-adenosyl-L-methionine-dependent O-methyltransferase that catalyzes regiospecific methylation at the 7-hydroxy group of 2,7-dihydroxy-5-methyl-1-naphthoate in the biosynthesis of the naphthoate moiety of the neocarzinostatin chromophore. Also recognizes other dihydroxynaphthoate as substrates and catalyzes their regiospecific O-methylation. The carboxylate and its ortho-hydroxy groups of the substrate appear to be crucial for NcsB1 substrate recognition and binding, and O-methylation takes place only at the free hydroxy group of these dihydroxynaphthoic acids. The chain is 2,7-dihydroxy-5-methyl-1-naphthoate 7-O-methyltransferase from Streptomyces carzinostaticus.